A 1845-amino-acid polypeptide reads, in one-letter code: Histone-lysine N-methyltransferase, H3 lysine-79 specific (1845 aa).

Polar residues predominate over residues 1–44 (MSTNSTPRKQKLSNSKSLQNSPISPTVKKTNSFPLGNNIPTNIN). Disordered stretches follow at residues 1–67 (MSTN…NGIG), 83–306 (PPLP…NKWT), 450–470 (SHDINNNNNNNNNNKNKNKNK), 486–571 (QKLK…TERK), 585–681 (RKER…NDSY), 741–767 (GETFLNDSRNNNNNNNNNKNNNNKKIE), 862–881 (QTTKTTTTTNNTTTTTAETE), and 963–1102 (KDNP…SNSL). Low complexity-rich tracts occupy residues 52 to 67 (NNSNNNINNNNSNGIG), 90 to 162 (SSSS…QQEP), 191 to 226 (PSTPNQSSNSSSLNSSLNFSSSNSSPSPTSTQSNNS), and 239 to 263 (NNNNNNNNNNNNNNNNNNNNNNNNN). A compositionally biased stretch (acidic residues) spans 268–280 (VIDDDDDDDDDEG). Polar residues predominate over residues 282–294 (SIKSTHTSTQSTP). The segment covering 295–304 (IRDRRQRDNK) has biased composition (basic and acidic residues). A compositionally biased stretch (low complexity) spans 453-464 (INNNNNNNNNNK). Basic and acidic residues predominate over residues 585-679 (RKERERKERK…IEKERREKND (95 aa)). Positions 625–639 (KKKEKEKEKEKEKEK) are required for interaction with nucleosomes and DNA. 4 stretches are compositionally biased toward low complexity: residues 750 to 763 (NNNNNNNNNKNNNN), 862 to 877 (QTTKTTTTTNNTTTTT), 972 to 1011 (NNNRNNNNNNNNIINNNNNNNNKNNNNKNNNNKNNNRNNN), and 1020 to 1067 (NNNN…NNTI). The segment covering 1069 to 1080 (KKIETIKKDINK) has biased composition (basic and acidic residues). Low complexity predominate over residues 1084–1102 (KTTTTTSSSSSSTSSSNSL). Positions 1125–1446 (FDVGIGVPVT…KDSDIVTDQT (322 aa)) constitute a DOT1 domain. S-adenosyl-L-methionine is bound by residues 1251–1254 (YGEA), 1274–1283 (FCDIGCGIGN), and E1300. Disordered stretches follow at residues 1463 to 1559 (LQLF…NKPI), 1610 to 1661 (RISP…SSND), 1735 to 1762 (HQKSIHDQQKRLSRKQKKLAKKNKKKEQ), 1772 to 1791 (NYNNNNNNNNQNDNQVNHNN), and 1799 to 1845 (TDLI…DNNK). Low complexity-rich tracts occupy residues 1467–1522 (SSSS…TPNS), 1541–1556 (NNNNININNNNNNSNN), and 1610–1642 (RISPSLSLSTSSSSSSSLDSSPYSSPPSSSSSD). Residues 1643 to 1656 (NENDDDNGDDEDDS) are compositionally biased toward acidic residues. Basic residues predominate over residues 1745–1759 (RLSRKQKKLAKKNKK). 2 stretches are compositionally biased toward low complexity: residues 1799–1817 (TDLINGYNNNNNNNIINND) and 1835–1845 (KDYNNINDNNK).

This sequence belongs to the class I-like SAM-binding methyltransferase superfamily. DOT1 family.

Its subcellular location is the nucleus. It carries out the reaction L-lysyl(79)-[histone H3] + 3 S-adenosyl-L-methionine = N(6),N(6),N(6)-trimethyl-L-lysyl(79)-[histone H3] + 3 S-adenosyl-L-homocysteine + 3 H(+). Its function is as follows. Histone methyltransferase that specifically methylates histone H3 to form H3K79me. This methylation is required for telomere silencing, correct growth and development, and for resistance to DNA damage induced by UV LIGHT. The sequence is that of Histone-lysine N-methyltransferase, H3 lysine-79 specific from Dictyostelium discoideum (Social amoeba).